The following is a 128-amino-acid chain: NPMYNVVSNADLVDFKNLLDHLEEKMPLEDEVVLPQVASEQNEEAGAVLSALPEVPSWPGEAGPAQREGGALGRGPWDSSDRSAPLKSKLRALLDAPRSLRRSSCFGGRMDRIGAQSSLGCNSFRYRR.

A disordered region spans residues 36–84; the sequence is QVASEQNEEAGAVLSALPEVPSWPGEAGPAQREGGALGRGPWDSSDRSA. A propeptide spanning residues 68 to 78 is cleaved from the precursor; that stretch reads EGGALGRGPWD. Serine 104 carries the post-translational modification Phosphoserine. A disulfide bond links cysteine 105 and cysteine 121. An important for degradation of atrial natriuretic peptide by IDE region spans residues 122–126; the sequence is NSFRY.

Belongs to the natriuretic peptide family. Homodimer; disulfide-linked antiparallel dimer. The precursor molecule is proteolytically cleaved by CORIN at Arg-98 to produce atrial natriuretic peptide. Undergoes further proteolytic cleavage by unknown proteases to give rise to long-acting natriuretic peptide, vessel dilator and kaliuretic peptide. Additional processing gives rise to the auriculin and atriopeptin peptides. In the kidneys, alternative processing by an unknown protease results in the peptide urodilatin. In terms of processing, cleavage by MME initiates degradation of the factor and thereby regulates its activity. Degraded by IDE (in vitro). During IDE degradation, the resulting products can temporarily stimulate NPR2 to produce cGMP, before the fragments are completely degraded and inactivated by IDE (in vitro). Post-translationally, degraded by IDE. Phosphorylation on Ser-104 decreases vasorelaxant activity.

The protein resides in the secreted. It localises to the perikaryon. The protein localises to the cell projection. Hormone that plays a key role in mediating cardio-renal homeostasis, and is involved in vascular remodeling and regulating energy metabolism. Acts by specifically binding and stimulating NPR1 to produce cGMP, which in turn activates effector proteins, such as PRKG1, that drive various biological responses. Regulates vasodilation, natriuresis, diuresis and aldosterone synthesis and is therefore essential for regulating blood pressure, controlling the extracellular fluid volume and maintaining the fluid-electrolyte balance. Also involved in inhibiting cardiac remodeling and cardiac hypertrophy by inducing cardiomyocyte apoptosis and attenuating the growth of cardiomyocytes and fibroblasts. Plays a role in female pregnancy by promoting trophoblast invasion and spiral artery remodeling in uterus, and thus prevents pregnancy-induced hypertension. In adipose tissue, acts in various cGMP- and PKG-dependent pathways to regulate lipid metabolism and energy homeostasis. This includes up-regulating lipid metabolism and mitochondrial oxygen utilization by activating the AMP-activated protein kinase (AMPK), and increasing energy expenditure by acting via MAPK11 to promote the UCP1-dependent thermogenesis of brown adipose tissue. Binds the clearance receptor NPR3 which removes the hormone from circulation. Its function is as follows. May have a role in cardio-renal homeostasis through regulation of natriuresis, diuresis, vasodilation, and inhibiting aldosterone synthesis. In vitro, promotes the production of cGMP and induces vasodilation. May promote natriuresis, at least in part, by enhancing prostaglandin E2 synthesis resulting in the inhibition of renal Na+-K+-ATPase. However reports on the involvement of this peptide in mammal blood volume and blood pressure homeostasis are conflicting; according to a report, in vivo it is not sufficient to activate cGMP and does not inhibit collecting duct transport nor effect diuresis and natriuresis. Appears to bind to specific receptors that are distinct from the receptors bound by atrial natriuretic peptide and vessel dilator. Possibly enhances protein excretion in urine by decreasing proximal tubular protein reabsorption. Functionally, may have a role in cardio-renal homeostasis through regulation of natriuresis, diuresis, and vasodilation. In vitro, promotes the production of cGMP and induces vasodilation. May promote natriuresis, at least in part, by enhancing prostaglandin E2 synthesis resulting in the inhibition of renal Na+-K+-ATPase. However reports on the involvement of this peptide in mammal blood volume and blood pressure homeostasis are conflicting; according to a report it is not sufficient to activate cGMP and does not inhibit collecting duct transport nor effect diuresis and natriuresis. Appears to bind to specific receptors that are distinct from the receptors bound by the atrial natriuretic and long-acting natriuretic peptides. Possibly functions in protein excretion in urine by maintaining the integrity of the proximal tubules and enhancing protein excretion by decreasing proximal tubular protein reabsorption. In terms of biological role, may have a role in cardio-renal homeostasis through regulation of diuresis and inhibiting aldosterone synthesis. In vitro, promotes the production of cGMP and induces vasodilation. May promote natriuresis, at least in part, by enhancing prostaglandin E2 synthesis resulting in the inhibition of renal Na+-K+-ATPase. May have a role in potassium excretion but not sodium excretion (natriuresis). Possibly enhances protein excretion in urine by decreasing proximal tubular protein reabsorption. Hormone produced in the kidneys that appears to be important for maintaining cardio-renal homeostasis. Mediates vasodilation, natriuresis and diuresis primarily in the renal system, in order to maintain the extracellular fluid volume and control the fluid-electrolyte balance. Specifically binds and stimulates cGMP production by renal transmembrane receptors, likely NPR1. Urodilatin not ANP, may be the natriuretic peptide responsible for the regulation of sodium and water homeostasis in the kidney. Its function is as follows. May have a role in cardio-renal homeostasis through regulation of natriuresis and vasodilation. In vivo promotes natriuresis and in vitro, vasodilates renal artery strips. Functionally, may have a role in cardio-renal homeostasis through regulation of regulation of natriuresis and vasodilation. In vivo promotes natriuresis. In vitro, vasodilates intestinal smooth muscle but not smooth muscle strips. In terms of biological role, may have a role in cardio-renal homeostasis through regulation of natriuresis and vasodilation. In vivo promotes natriuresis. In vitro, selectively vasodilates intestinal and vascular smooth muscle strips. May have a role in cardio-renal homeostasis through regulation of natriuresis and vasodilation. In vivo promotes natriuresis. In vitro, selectively vasodilates intestinal smooth muscle but not vascular smooth muscle strips. This chain is Natriuretic peptides A (NPPA), found in Cavia porcellus (Guinea pig).